Here is a 166-residue protein sequence, read N- to C-terminus: Endoribonuclease YbeY (166 aa).

His-125, His-129, and His-135 together coordinate Zn(2+).

The protein belongs to the endoribonuclease YbeY family. Zn(2+) is required as a cofactor.

It localises to the cytoplasm. In terms of biological role, single strand-specific metallo-endoribonuclease involved in late-stage 70S ribosome quality control and in maturation of the 3' terminus of the 16S rRNA. This Alkalilimnicola ehrlichii (strain ATCC BAA-1101 / DSM 17681 / MLHE-1) protein is Endoribonuclease YbeY.